The sequence spans 362 residues: MAPKQDPKPKFQEGERVLCFHGPLLYEAKCVKVAIKDKQVKYFIHYSGWNKKSAVRPRRSEKSLKTREDIVALFPVPEGAPSVHHPLLTSSWDEWVPESRVLKYVDTNLQKQRELQKANQEQYAEGKMRGAAPGKKTSGLQQKNVEVKTKKNKQKTPGNGDGGSTSETPQPPRKKRARVDPTVENEETFMNRVEVKVKIPEELKPWLVDDWDLITRQKQLFYLPAKKNVDSILEDYANYKKSRGNTDNKEYAVNEVVAGIKEYFNVMLGTQLLYKFERPQYAEILADHPDAPMSQVYGAPHLLRLFVRIGAMLAYTPLDEKSLALLLNYLHDFLKYLAKNSATLFSASDYEVAPPEYHRKAV.

The Tudor-knot domain maps to 12-51; sequence QEGERVLCFHGPLLYEAKCVKVAIKDKQVKYFIHYSGWNK. Residues 26–62 form an interaction with KAT8 region; it reads YEAKCVKVAIKDKQVKYFIHYSGWNKKSAVRPRRSEK. The tract at residues 113–182 is disordered; sequence RELQKANQEQ…RKKRARVDPT (70 aa). Residues 133-266 form a sufficient for interaction with SIN3A region; it reads PGKKTSGLQQ…VAGIKEYFNV (134 aa). The Nuclear localization signal motif lies at 135 to 146; the sequence is KKTSGLQQKNVE. Position 143 is an N6-acetyllysine (Lys-143). Positions 164-230 are interaction with RB1-1; the sequence is STSETPQPPR…FYLPAKKNVD (67 aa). The sufficient for interaction with PHF12 stretch occupies residues 188–342; that stretch reads TFMNRVEVKV…FLKYLAKNSA (155 aa). In terms of domain architecture, MRG spans 191 to 362; it reads NRVEVKVKIP…APPEYHRKAV (172 aa). An interaction with RB1-2 region spans residues 323-344; the sequence is LALLLNYLHDFLKYLAKNSATL.

In terms of assembly, component of the NuA4 histone acetyltransferase complex which contains the catalytic subunit KAT5/TIP60 and the subunits EP400, TRRAP/PAF400, BRD8/SMAP, EPC1, DMAP1/DNMAP1, RUVBL1/TIP49, RUVBL2, ING3, actin, ACTL6A/BAF53A, MORF4L1/MRG15, MORF4L2/MRGX, MRGBP, YEATS4/GAS41, VPS72/YL1 and MEAF6. The NuA4 complex interacts with MYC and the adenovirus E1A protein. MORF4L1 may also participate in the formation of NuA4 related complexes which lack the KAT5/TIP60 catalytic subunit, but which include the SWI/SNF related protein SRCAP. Component of the mSin3A histone deacetylase complex, which includes SIN3A, HDAC2, ARID4B, MORF4L1, RBBP4/RbAp48, and RBBP7/RbAp46. May also interact with PHF12 and one or more as yet undefined members of the TLE (transducin-like enhancer of split) family of transcriptional repressors. Component of the SIN3B complex, which includes SIN3B, HDAC2 or HDAC1, PHF12 and MORF4L1. Interacts with RB1 and KAT8. Interacts with the N-terminus of MRFAP1. Found in a complex composed of MORF4L1, MRFAP1 and RB1. Interacts with the entire BRCA complex, which contains BRCA1, PALB2, BRCA2 and RAD51. Interacts with PALB2. Forms a complex with MSL1 and NUPR1.

It is found in the nucleus. Functionally, component of the NuA4 histone acetyltransferase (HAT) complex which is involved in transcriptional activation of select genes principally by acetylation of nucleosomal histones H4 and H2A. This modification may both alter nucleosome - DNA interactions and promote interaction of the modified histones with other proteins which positively regulate transcription. This complex may be required for the activation of transcriptional programs associated with oncogene and proto-oncogene mediated growth induction, tumor suppressor mediated growth arrest and replicative senescence, apoptosis, and DNA repair. The NuA4 complex ATPase and helicase activities seem to be, at least in part, contributed by the association of RUVBL1 and RUVBL2 with EP400. NuA4 may also play a direct role in DNA repair when directly recruited to sites of DNA damage. As part of the SIN3B complex represses transcription and counteracts the histone acetyltransferase activity of EP300 through the recognition H3K27ac marks by PHF12 and the activity of the histone deacetylase HDAC2. SIN3B complex is recruited downstream of the constitutively active genes transcriptional start sites through interaction with histones and mitigates histone acetylation and RNA polymerase II progression within transcribed regions contributing to the regulation of transcription. Required for homologous recombination repair (HRR) and resistance to mitomycin C (MMC). Involved in the localization of PALB2, BRCA2 and RAD51, but not BRCA1, to DNA-damage foci. This is Mortality factor 4-like protein 1 (Morf4l1) from Mus musculus (Mouse).